The sequence spans 486 residues: Ribosomal RNA small subunit methyltransferase F (486 aa).

Residues Ala-124 to Lys-130, Glu-148, Asp-175, and Asp-193 contribute to the S-adenosyl-L-methionine site. The Nucleophile role is filled by Cys-246.

Belongs to the class I-like SAM-binding methyltransferase superfamily. RsmB/NOP family.

The protein resides in the cytoplasm. It catalyses the reaction cytidine(1407) in 16S rRNA + S-adenosyl-L-methionine = 5-methylcytidine(1407) in 16S rRNA + S-adenosyl-L-homocysteine + H(+). Its function is as follows. Specifically methylates the cytosine at position 1407 (m5C1407) of 16S rRNA. The polypeptide is Ribosomal RNA small subunit methyltransferase F (Shewanella putrefaciens (strain CN-32 / ATCC BAA-453)).